We begin with the raw amino-acid sequence, 432 residues long: Malate dehydrogenase [NADP], chloroplastic (432 aa).

A chloroplast-targeting transit peptide spans 1–40 (MGLSTVYSPAGPRLVPAPLGRCRSAQPRRPRRAPLATVRC). The interval 18 to 37 (PLGRCRSAQPRRPRRAPLAT) is disordered. Cysteines 67 and 72 form a disulfide. 96 to 102 (GAAGMIS) contributes to the NADP(+) binding site. Residues Arg-177 and Arg-183 each coordinate substrate. Asn-190 lines the NADP(+) pocket. Gln-197 is a binding site for NAD(+). Position 214–216 (214–216 (VGN)) interacts with NADP(+). Substrate contacts are provided by Asn-216 and Arg-247. Residue His-272 is the Proton acceptor of the active site. Cys-408 and Cys-420 are joined by a disulfide.

Belongs to the LDH/MDH superfamily. MDH type 2 family. As to quaternary structure, homodimer.

The protein resides in the plastid. It is found in the chloroplast. The enzyme catalyses (S)-malate + NADP(+) = oxaloacetate + NADPH + H(+). Its activity is regulated as follows. Chloroplast NADP-MDH is activated upon illumination. In order to be enzymatically active, disulfide bridges on the protein must be reduced by thioredoxin which receives electrons from ferredoxin and the electron transport system of photosynthesis. The chloroplastic, NADP-dependent form is essential for the photosynthesis C4 cycle, which allows plants to circumvent the problem of photorespiration. In C4 plants, NADP-MDH activity acts to convert oxaloacetate to malate in chloroplasts of mesophyll cells for transport to the bundle sheath cells. The sequence is that of Malate dehydrogenase [NADP], chloroplastic from Zea mays (Maize).